We begin with the raw amino-acid sequence, 460 residues long: MASLLQSDRVVYLVQGEKKVRAPLSQLYFCRYCSELRSLECVSHEVDSHYCPSCLENMPSAEAKLKKNRCANCFDCPGCMHTLSTRATSISTQLPDDPAKTTMKKAYYLACGFCRWTSRDVGMADKSVASGGWQEPENPHTQRMNKLIEYYQQLAQKEKVERDRKKLARRRNYMPLAFSDKYGLGTRLQRPRAGASISTLAGLSLKEGEDQKEIKIEPAQAVDEVEPLPEDYYTRPVNLTEVTTLQQRLLQPDFQPVCASQLYPRHKHLLIKRSLRCRKCEHNLSKPEFNPTSIKFKIQQVAVNYIPEVRIMSIPNLRYMKESQVLLTLTNPVENLTHVTLLECEEGDPDNTNSTAKVVVPPKELVLAGKDAAAEYDELAEPQDFQDDPDIIAFRKANKVGIFIKVTPQREEGEVTVCFKMKHDFKNLAAPIRPIEESDQGTEVIWLTQHVELSLGPLLP.

At A2 the chain carries N-acetylalanine. A coiled-coil region spans residues 152–172 (QQLAQKEKVERDRKKLARRRN). S196 is subject to Phosphoserine. K215 participates in a covalent cross-link: Glycyl lysine isopeptide (Lys-Gly) (interchain with G-Cter in SUMO2). Position 407 is a phosphothreonine (T407).

It belongs to the dynactin subunit 4 family. Subunit of dynactin, a multiprotein complex part of a tripartite complex with dynein and a adapter, such as BICDL1, BICD2 or HOOK3. The dynactin complex is built around ACTR1A/ACTB filament and consists of an actin-related filament composed of a shoulder domain, a pointed end and a barbed end. Its length is defined by its flexible shoulder domain. The soulder is composed of 2 DCTN1 subunits, 4 DCTN2 and 2 DCTN3. The 4 DCNT2 (via N-terminus) bind the ACTR1A filament and act as molecular rulers to determine the length. The pointed end is important for binding dynein-dynactin cargo adapters. Consists of 4 subunits: ACTR10, DCNT4, DCTN5 and DCTN6. The barbed end is composed of a CAPZA1:CAPZB heterodimers, which binds ACTR1A/ACTB filament and dynactin and stabilizes dynactin. Interacts with ATP7B, but not ATP7A, in a copper-dependent manner. Interacts with ANK2; this interaction is required for localization at costameres. Interacts with N4BP2L1.

Its subcellular location is the cytoplasm. The protein resides in the cytoskeleton. It localises to the microtubule organizing center. The protein localises to the centrosome. It is found in the stress fiber. Its subcellular location is the cell cortex. The protein resides in the myofibril. It localises to the sarcomere. Functionally, part of the dynactin complex that activates the molecular motor dynein for ultra-processive transport along microtubules. This is Dynactin subunit 4 (DCTN4) from Pongo abelii (Sumatran orangutan).